The primary structure comprises 214 residues: GTP-binding nuclear protein Ran (214 aa).

The region spanning 6 to 170 is the Small GTPase Ran-type domain; it reads YIPQYKLILV…LWLARRLSNQ (165 aa). 17–24 contributes to the GTP binding site; it reads DGGVGKTT. The segment at 36–44 is switch-I; sequence KKYIPTLGV. GTP-binding positions include G67, 121–124, and 149–151; these read NKVD and SAR. Residues 67–83 are switch-II; sequence GQEKFGGLRDGYYIKSD.

This sequence belongs to the small GTPase superfamily. Ran family. As to quaternary structure, found in a nuclear export complex with RanGTP, exportin and pre-miRNA.

It localises to the nucleus. In terms of biological role, GTP-binding protein involved in nucleocytoplasmic transport. Required for the import of protein into the nucleus and also for RNA export. Involved in chromatin condensation and control of cell cycle. This chain is GTP-binding nuclear protein Ran, found in Plasmodium falciparum.